A 707-amino-acid chain; its full sequence is MMRNLAQQVGLFVCRISSGTSAWNSVISASYFSAGITRYSRSTVYRGYKAWQNLLDSEKRRWQRACAKYQGLVTSLEKRLCDMHQSYSTGDEKGMIIYEDYIYFQDNGCICRYKPNTGEDSLEVLLISEDLGLGDYEIQKIRVSPKQKFMAVTLKGYEREESTCVVVKLDNGPQVTHCIENVFSCEWATDRMLLHTSQVNVQCRQVFATDFSDANGAAQLVYTENDPRFFVDLYCTRDKRFITINSNSKSTSEVRLIDNRCPFEPPVLVQKRIAGVIYYIEHSNGCLYMLRRHGEAAEYKILKAAVSSGMKHWEPVYEVQERTKLVDMEMLKDHCLLFLKNHNQLSLEVIGLPSGAVLQSIKLPAWACALELDHQAEYGAGTVGFSLSSPVHPPVHFEYSLRKKQLSVDTNHSSDGIHQFHTLRLEAKSKDGTSVPLTLLYKDSEKQMRQRPLLIHVYGAYGMDLNMSFKVEKRMLVEEGWLLAYCHVRGGGELGCNWHSEGVLDKKLNGLEDLGSCISHLHGLGYSQPHYSAVEAASAGGVLAGALCNSAPRLFRAVVLEAPFLDVLNTMMNVSLPLTIEEQEEWGNPLSDEKYHRYIKSYCPYQNITPQNYPCVRITAYENDQRVPIQGLLGYITRLRKAARDYCHESGTSESRIPHIYLDVHPGGSHCDSLSWEESLRKVATQLAFLHMELKLDIPRRCKGSTQ.

Active-site charge relay system residues include Ser538, Asp624, and His670.

Belongs to the peptidase S9A family. In terms of assembly, homodimer.

Its subcellular location is the cytoplasm. The protein resides in the cytosol. In terms of biological role, serine peptidase whose precise substrate specificity remains unclear. Does not cleave peptides after a arginine or lysine residue. Regulates trans-Golgi network morphology and sorting by regulating the membrane binding of the AP-1 complex. May play a role in the regulation of synaptic vesicle exocytosis. In Xenopus laevis (African clawed frog), this protein is Prolyl endopeptidase-like (prepl).